The sequence spans 388 residues: Putative O-antigen polymerase (388 aa).

The next 9 helical transmembrane spans lie at 23-43 (IFYP…GYEI), 57-77 (LIFL…TESV), 97-117 (VHNV…MRLS), 143-163 (NFSA…IWSK), 180-200 (IVFI…MVII), 215-235 (VYLI…LRGL), 312-332 (ISAE…GVLW), 338-358 (YISV…IFYH), and 361-381 (FMTN…FSQF).

The protein resides in the cell inner membrane. Functionally, may function in vitro as a polymerase that catalyzes the polymerization of the O-antigen repeat units on the periplasmic face of the inner membrane, leading to the formation of the lipid-linked O-antigen molecule. However, E.coli K12 strains do not normally produce the O-antigen in vivo due to mutations in the rfb gene cluster. K12 strains are phenotypically rough, their lipopolysaccharide having a complete core structure, but no O-antigen. The chain is Putative O-antigen polymerase from Escherichia coli (strain K12).